The primary structure comprises 539 residues: Histone-arginine methyltransferase CARMER (539 aa).

Residues 149-458 (ASQYFQFYGY…QSYDVTIDLH (310 aa)) form the SAM-dependent MTase PRMT-type domain. S-adenosyl-L-methionine contacts are provided by Q162, R171, G195, E217, E246, and T274. R509 is modified (asymmetric dimethylarginine; by autocatalysis).

The protein belongs to the class I-like SAM-binding methyltransferase superfamily. Protein arginine N-methyltransferase family. As to quaternary structure, homodimer. The dimethylated protein is the major form.

The protein localises to the cytoplasm. The protein resides in the nucleus. The catalysed reaction is L-arginyl-[protein] + 2 S-adenosyl-L-methionine = N(omega),N(omega)-dimethyl-L-arginyl-[protein] + 2 S-adenosyl-L-homocysteine + 2 H(+). Functionally, methylates (mono- and asymmetric dimethylation) the guanidino nitrogens of arginyl residues in proteins. May methylate histone H3 at 'Arg-17' and activate transcription via chromatin remodeling. The polypeptide is Histone-arginine methyltransferase CARMER (Art4) (Drosophila mojavensis (Fruit fly)).